Consider the following 367-residue polypeptide: TATA-box-binding protein-like (367 aa).

The tract at residues 1–26 (MKKQSKTHKVDYKYYNSGSKTSRNRN) is disordered. The segment covering 16-26 (NSGSKTSRNRN) has biased composition (polar residues).

This sequence belongs to the TBP family.

In Acanthamoeba polyphaga (Amoeba), this protein is TATA-box-binding protein-like.